We begin with the raw amino-acid sequence, 242 residues long: NADPH-dependent pterin aldehyde reductase (242 aa).

N-acetylthreonine is present on threonine 2. 21–50 (LITGVSKGLGRALALELAKRGHTVIGCARS) serves as a coordination point for NADP(+). Serine 153 contributes to the substrate binding site. Catalysis depends on tyrosine 166, which acts as the Proton acceptor. Lysine 170 provides a ligand contact to NADP(+).

Belongs to the short-chain dehydrogenases/reductases (SDR) family. Homodimer. In terms of tissue distribution, mostly expressed in seeds, and, to a lower extent, in roots, leaves, flowers and siliques.

The protein resides in the cytoplasm. Functionally, NADPH-dependent pterin aldehyde reductase involved in pterin aldehyde salvage during folate turnover. Catalyzes the reduction of diverse aromatic and aliphatic aldehydes (e.g. acetaldehyde, n-propanal, 1-naphthaldehyde, benzaldehyde, cinnamaldehyde, n-butanal, n-hexanal, n-pentanal, 2-naphthaldehyde, n-octanal, n-nonanal and n-heptanal), in addition to the conversion of pterin-6-aldehyde (PtCHO) to 6-hydroxymethylpterin (PtCH(2)OH), and the conversion of dihydropterin-6-aldehyde (H(2)PtCHO) to 6-hydroxymethyldihydropterin (H(2)PtCH(2)OH). Cannot reduce the pterin ring. The protein is NADPH-dependent pterin aldehyde reductase of Arabidopsis thaliana (Mouse-ear cress).